We begin with the raw amino-acid sequence, 162 residues long: Transcriptional regulator MraZ (162 aa).

SpoVT-AbrB domains follow at residues Glu-11 to Val-62 and Ala-98 to Thr-141.

It belongs to the MraZ family. As to quaternary structure, forms oligomers.

It is found in the cytoplasm. Its subcellular location is the nucleoid. The polypeptide is Transcriptional regulator MraZ (Pelobacter propionicus (strain DSM 2379 / NBRC 103807 / OttBd1)).